Consider the following 57-residue polypeptide: MKNAKQEHFELDQEWVELMVEAKEANISPEEIRKYLLLNKKSAHPGPAARSHTVNPF.

A Sin domain is found at 2-40 (KNAKQEHFELDQEWVELMVEAKEANISPEEIRKYLLLNK).

In terms of assembly, heterodimer with SinR.

Its function is as follows. Acts as an antagonist to SinR. SinI prevents SinR from binding to its target sequence on the gene for AprE. This Bacillus subtilis (strain 168) protein is Protein SinI (sinI).